The sequence spans 254 residues: Adenosine 5'-phosphosulfate reductase (254 aa).

Residues Cys-140, Cys-141, Cys-223, and Cys-226 each coordinate [4Fe-4S] cluster. The Nucleophile; cysteine thiosulfonate intermediate role is filled by Cys-249.

Belongs to the PAPS reductase family. CysH subfamily. It depends on [4Fe-4S] cluster as a cofactor.

The protein localises to the cytoplasm. The catalysed reaction is [thioredoxin]-disulfide + sulfite + AMP + 2 H(+) = adenosine 5'-phosphosulfate + [thioredoxin]-dithiol. It participates in sulfur metabolism; hydrogen sulfide biosynthesis; sulfite from sulfate. Functionally, catalyzes the formation of sulfite from adenosine 5'-phosphosulfate (APS) using thioredoxin as an electron donor. The polypeptide is Adenosine 5'-phosphosulfate reductase (Mycobacterium bovis (strain ATCC BAA-935 / AF2122/97)).